Consider the following 220-residue polypeptide: Charged multivesicular body protein 2a (220 aa).

Position 1 is an N-acetylmethionine (methionine 1). Coiled-coil stretches lie at residues 12–52 and 195–220; these read EELL…KMAK and RAAEAAAALADADADLEERLKNLRRD. Positions 208-218 match the MIT-interacting motif motif; the sequence is ADLEERLKNLR.

This sequence belongs to the SNF7 family. As to quaternary structure, probable core component of the endosomal sorting required for transport complex III (ESCRT-III). ESCRT-III components are thought to multimerize to form a flat lattice on the perimeter membrane of the endosome.

Its subcellular location is the late endosome membrane. The protein localises to the cytoplasm. Probable core component of the endosomal sorting required for transport complex III (ESCRT-III) which is involved in multivesicular bodies (MVBs) formation and sorting of endosomal cargo proteins into MVBs. MVBs contain intraluminal vesicles (ILVs) that are generated by invagination and scission from the limiting membrane of the endosome and mostly are delivered to lysosomes enabling degradation of membrane proteins, such as stimulated growth factor receptors, lysosomal enzymes and lipids. This Gallus gallus (Chicken) protein is Charged multivesicular body protein 2a (CHMP2A).